We begin with the raw amino-acid sequence, 258 residues long: MREEKFYSVRMRASKNGSHEVGGKHLSGGERLTTYENMIHTVNALLEKGIYHSRGKPDFMKIQFECIDEPIQLVNPLHIETHEVESAEKGQVLARKLLEKAGIQKKMIDLAYEQIPECSGLRGAILFDIHSGKRIDQRKERGVRVSRMDWPDTNFDKWTKCYQMPRNSRIKEALVLATKVSEHPATIAELCWSDDPDYITGYVASKKLGYQRITKLKEYGNESGCRIFFVDGLRDLETYIDYLEKQPVFIQWEEENDA.

The protein belongs to the BioW family. In terms of assembly, homodimer. Mg(2+) serves as cofactor.

The catalysed reaction is heptanedioate + ATP + CoA = 6-carboxyhexanoyl-CoA + AMP + diphosphate. It participates in metabolic intermediate metabolism; pimeloyl-CoA biosynthesis; pimeloyl-CoA from pimelate: step 1/1. In terms of biological role, catalyzes the transformation of pimelate into pimeloyl-CoA with concomitant hydrolysis of ATP to AMP. This Bacillus atrophaeus (strain 1942) protein is 6-carboxyhexanoate--CoA ligase.